Here is a 427-residue protein sequence, read N- to C-terminus: Trigger factor (427 aa).

A PPIase FKBP-type domain is found at 163–248 (GDTVVIDFEG…VHEVKAKELP (86 aa)).

The protein belongs to the FKBP-type PPIase family. Tig subfamily.

It localises to the cytoplasm. The enzyme catalyses [protein]-peptidylproline (omega=180) = [protein]-peptidylproline (omega=0). Involved in protein export. Acts as a chaperone by maintaining the newly synthesized protein in an open conformation. Functions as a peptidyl-prolyl cis-trans isomerase. This is Trigger factor from Enterococcus faecalis (strain ATCC 700802 / V583).